The primary structure comprises 209 residues: Ribosomal RNA small subunit methyltransferase G (209 aa).

S-adenosyl-L-methionine contacts are provided by G74, F79, and R139.

Belongs to the methyltransferase superfamily. RNA methyltransferase RsmG family.

It localises to the cytoplasm. It catalyses the reaction guanosine(527) in 16S rRNA + S-adenosyl-L-methionine = N(7)-methylguanosine(527) in 16S rRNA + S-adenosyl-L-homocysteine. In terms of biological role, specifically methylates the N7 position of guanine in position 527 of 16S rRNA. This chain is Ribosomal RNA small subunit methyltransferase G, found in Halorhodospira halophila (strain DSM 244 / SL1) (Ectothiorhodospira halophila (strain DSM 244 / SL1)).